A 274-amino-acid polypeptide reads, in one-letter code: Dermonecrotic toxin SaSicTox-betaIIB1 (274 aa).

His5 is a catalytic residue. The Mg(2+) site is built by Glu25 and Asp27. Catalysis depends on His41, which acts as the Nucleophile. 2 disulfide bridges follow: Cys45/Cys51 and Cys47/Cys190. Asp85 is a Mg(2+) binding site.

It belongs to the arthropod phospholipase D family. Class II subfamily. The cofactor is Mg(2+). In terms of tissue distribution, expressed by the venom gland.

The protein localises to the secreted. The enzyme catalyses an N-(acyl)-sphingosylphosphocholine = an N-(acyl)-sphingosyl-1,3-cyclic phosphate + choline. It catalyses the reaction an N-(acyl)-sphingosylphosphoethanolamine = an N-(acyl)-sphingosyl-1,3-cyclic phosphate + ethanolamine. The catalysed reaction is a 1-acyl-sn-glycero-3-phosphocholine = a 1-acyl-sn-glycero-2,3-cyclic phosphate + choline. It carries out the reaction a 1-acyl-sn-glycero-3-phosphoethanolamine = a 1-acyl-sn-glycero-2,3-cyclic phosphate + ethanolamine. Its function is as follows. Dermonecrotic toxins cleave the phosphodiester linkage between the phosphate and headgroup of certain phospholipids (sphingolipid and lysolipid substrates), forming an alcohol (often choline) and a cyclic phosphate. This toxin acts on sphingomyelin (SM). It may also act on ceramide phosphoethanolamine (CPE), lysophosphatidylcholine (LPC) and lysophosphatidylethanolamine (LPE), but not on lysophosphatidylserine (LPS), and lysophosphatidylglycerol (LPG). It acts by transphosphatidylation, releasing exclusively cyclic phosphate products as second products. Induces dermonecrosis, hemolysis, increased vascular permeability, edema, inflammatory response, and platelet aggregation. The sequence is that of Dermonecrotic toxin SaSicTox-betaIIB1 from Sicarius albospinosus (Six-eyed crab spider).